Here is a 366-residue protein sequence, read N- to C-terminus: Alanine racemase (366 aa).

Residue lysine 40 is the Proton acceptor; specific for D-alanine of the active site. N6-(pyridoxal phosphate)lysine is present on lysine 40. Arginine 136 is a binding site for substrate. Residue tyrosine 263 is the Proton acceptor; specific for L-alanine of the active site. Methionine 310 contacts substrate.

This sequence belongs to the alanine racemase family. Pyridoxal 5'-phosphate serves as cofactor.

The enzyme catalyses L-alanine = D-alanine. Its pathway is amino-acid biosynthesis; D-alanine biosynthesis; D-alanine from L-alanine: step 1/1. Functionally, catalyzes the interconversion of L-alanine and D-alanine. May also act on other amino acids. The polypeptide is Alanine racemase (alr) (Streptococcus pyogenes serotype M5 (strain Manfredo)).